Here is an 895-residue protein sequence, read N- to C-terminus: DNA mismatch repair protein MutS (895 aa).

ATP is bound at residue 632-639 (GPNMAGKS). Positions 824–849 (VTQDKKQVKKQTKNNHSARSGSRQQQ) are disordered. The segment covering 837-849 (NNHSARSGSRQQQ) has biased composition (polar residues).

It belongs to the DNA mismatch repair MutS family.

In terms of biological role, this protein is involved in the repair of mismatches in DNA. It is possible that it carries out the mismatch recognition step. This protein has a weak ATPase activity. The protein is DNA mismatch repair protein MutS of Desulforapulum autotrophicum (strain ATCC 43914 / DSM 3382 / VKM B-1955 / HRM2) (Desulfobacterium autotrophicum).